Consider the following 504-residue polypeptide: Cytochrome P450 2S1 (504 aa).

Cys440 contacts heme.

This sequence belongs to the cytochrome P450 family. It depends on heme as a cofactor. In terms of tissue distribution, expressed at higher levels in extrahepatic tissues including trachea, lung, stomach, small intestine, colon, kidney, breast, placenta and spleen. Expressed in peripheral blood leukocytes. Constitutively expressed in skin (at protein level).

The protein resides in the endoplasmic reticulum membrane. Its subcellular location is the microsome membrane. It catalyses the reaction all-trans-retinoate + reduced [NADPH--hemoprotein reductase] + O2 = all-trans-5,6-epoxyretinoate + oxidized [NADPH--hemoprotein reductase] + H2O + H(+). The enzyme catalyses all-trans-retinoate + reduced [NADPH--hemoprotein reductase] + O2 = all-trans-4-hydroxyretinoate + oxidized [NADPH--hemoprotein reductase] + H2O + H(+). It carries out the reaction (5S)-hydroperoxy-(6E,8Z,11Z,14Z)-eicosatetraenoate = 5-oxo-(6E,8Z,11Z,14Z)-eicosatetraenoate + H2O. The catalysed reaction is (12S)-hydroperoxy-(5Z,8Z,10E,14Z)-eicosatetraenoate = 12-oxo-(5Z,8Z,10E,14Z)-eicosatetraenoate + H2O. It catalyses the reaction (15S)-hydroperoxy-(5Z,8Z,11Z,13E)-eicosatetraenoate = 15-oxo-(5Z,8Z,11Z,13E)-eicosatetraenoate + H2O. The enzyme catalyses prostaglandin H2 = thromboxane A2. It carries out the reaction prostaglandin H2 = (12S)-hydroxy-(5Z,8E,10E)-heptadecatrienoate + malonaldehyde. The catalysed reaction is (13S)-hydroperoxy-(9Z,11E)-octadecadienoate = 13-oxo-(9Z,11E)-octadecadienoate + H2O. The protein operates within lipid metabolism; fatty acid metabolism. A cytochrome P450 monooxygenase involved in the metabolism of retinoids and eicosanoids. In epidermis, may contribute to the oxidative metabolism of all-trans-retinoic acid. For this activity, uses molecular oxygen inserting one oxygen atom into a substrate, and reducing the second into a water molecule, with two electrons provided by NADPH via cytochrome P450 reductase (NADPH--hemoprotein reductase). Additionally, displays peroxidase and isomerase activities toward various oxygenated eicosanoids such as prostaglandin H2 (PGH2) and hydroperoxyeicosatetraenoates (HPETEs). Independently of cytochrome P450 reductase, NADPH, and O2, catalyzes the breakdown of PGH2 to hydroxyheptadecatrienoic acid (HHT) and malondialdehyde (MDA), which is known to act as a mediator of DNA damage. This is Cytochrome P450 2S1 from Homo sapiens (Human).